We begin with the raw amino-acid sequence, 272 residues long: Pantothenate synthetase (272 aa).

Position 27–34 (27–34 (MGALHNGH)) interacts with ATP. His34 (proton donor) is an active-site residue. (R)-pantoate is bound at residue Gln58. Residue Gln58 participates in beta-alanine binding. 143–146 (GKKD) is a binding site for ATP. Position 149 (Gln149) interacts with (R)-pantoate. Residues Val172 and 180-183 (LSSR) each bind ATP.

It belongs to the pantothenate synthetase family. Homodimer.

The protein resides in the cytoplasm. The enzyme catalyses (R)-pantoate + beta-alanine + ATP = (R)-pantothenate + AMP + diphosphate + H(+). The protein operates within cofactor biosynthesis; (R)-pantothenate biosynthesis; (R)-pantothenate from (R)-pantoate and beta-alanine: step 1/1. Functionally, catalyzes the condensation of pantoate with beta-alanine in an ATP-dependent reaction via a pantoyl-adenylate intermediate. The protein is Pantothenate synthetase of Aliarcobacter butzleri (strain RM4018) (Arcobacter butzleri).